A 438-amino-acid chain; its full sequence is ATP-dependent protease ATPase subunit HslU (438 aa).

ATP contacts are provided by residues isoleucine 18, 60–65 (GVGKTE), aspartate 251, glutamate 316, and arginine 388.

This sequence belongs to the ClpX chaperone family. HslU subfamily. In terms of assembly, a double ring-shaped homohexamer of HslV is capped on each side by a ring-shaped HslU homohexamer. The assembly of the HslU/HslV complex is dependent on binding of ATP.

It localises to the cytoplasm. Its function is as follows. ATPase subunit of a proteasome-like degradation complex; this subunit has chaperone activity. The binding of ATP and its subsequent hydrolysis by HslU are essential for unfolding of protein substrates subsequently hydrolyzed by HslV. HslU recognizes the N-terminal part of its protein substrates and unfolds these before they are guided to HslV for hydrolysis. In Jannaschia sp. (strain CCS1), this protein is ATP-dependent protease ATPase subunit HslU.